Reading from the N-terminus, the 344-residue chain is Phenylalanine--tRNA ligase alpha subunit (344 aa).

Mg(2+) is bound at residue Glu-256.

Belongs to the class-II aminoacyl-tRNA synthetase family. Phe-tRNA synthetase alpha subunit type 1 subfamily. Tetramer of two alpha and two beta subunits. Mg(2+) is required as a cofactor.

It localises to the cytoplasm. The catalysed reaction is tRNA(Phe) + L-phenylalanine + ATP = L-phenylalanyl-tRNA(Phe) + AMP + diphosphate + H(+). This chain is Phenylalanine--tRNA ligase alpha subunit, found in Anoxybacillus flavithermus (strain DSM 21510 / WK1).